The following is a 369-amino-acid chain: 3 beta-hydroxysteroid dehydrogenase type 7 (369 aa).

The Proton acceptor role is filled by Tyr-159. Lys-163 contributes to the NAD(+) binding site. Helical transmembrane passes span 289-309 (LLPYWLLVLLATLNALLQWLL) and 312-334 (LVLYTPLLNPYTLAMANTTFTVS).

Belongs to the 3-beta-HSD family. Predominantly expressed in liver.

The protein resides in the endoplasmic reticulum membrane. It catalyses the reaction 7alpha-hydroxycholesterol + NAD(+) = 7alpha-hydroxycholest-4-en-3-one + NADH + H(+). The enzyme catalyses 7alpha,25-dihydroxycholesterol + NAD(+) = 7alpha,25-dihydroxy-4-cholesten-3-one + NADH + H(+). It carries out the reaction (25R)-cholest-5-en-3beta,7alpha,26-triol + NAD(+) = (25R)-7alpha,26-dihydroxycholest-4-en-3-one + NADH + H(+). The catalysed reaction is (24S)-7alpha-dihydroxycholesterol + NAD(+) = (24S)-7alpha,24-dihydroxycholest-4-en-3-one + NADH + H(+). It functions in the pathway lipid metabolism; steroid biosynthesis. In terms of biological role, the 3-beta-HSD enzymatic system plays a crucial role in the biosynthesis of all classes of hormonal steroids. HSD VII is active against four 7-alpha-hydroxylated sterols. Does not metabolize several different C(19/21) steroids as substrates. Involved in bile acid synthesis. Plays a key role in cell positioning and movement in lymphoid tissues by mediating degradation of 7-alpha,25-dihydroxycholesterol (7-alpha,25-OHC): 7-alpha,25-OHC acts as a ligand for the G protein-coupled receptor GPR183/EBI2, a chemotactic receptor for a number of lymphoid cells. The polypeptide is 3 beta-hydroxysteroid dehydrogenase type 7 (Mus musculus (Mouse)).